The primary structure comprises 515 residues: Galactose/methyl galactoside import ATP-binding protein MglA (515 aa).

ABC transporter domains follow at residues 8–243 (LEMR…VGRE) and 254–499 (IPKE…AKYL). 40–47 (GENGAGKS) is a binding site for ATP.

The protein belongs to the ABC transporter superfamily. Galactose/methyl galactoside importer (TC 3.A.1.2.3) family. The complex is composed of one ATP-binding protein (MglA), two transmembrane proteins (MglC) and a solute-binding protein (MglB).

Its subcellular location is the cell membrane. The catalysed reaction is D-galactose(out) + ATP + H2O = D-galactose(in) + ADP + phosphate + H(+). It catalyses the reaction methyl beta-D-galactoside(out) + ATP + H2O = methyl beta-D-galactoside(in) + ADP + phosphate + H(+). In terms of biological role, part of the ABC transporter complex MglABC involved in galactose/methyl galactoside import. Responsible for energy coupling to the transport system. The polypeptide is Galactose/methyl galactoside import ATP-binding protein MglA (Clostridium perfringens (strain SM101 / Type A)).